A 644-amino-acid chain; its full sequence is Threonine--tRNA ligase (644 aa).

The 61-residue stretch at 1–61 (MPVITLPDGS…EKDTKLTIIT (61 aa)) folds into the TGS domain. Residues 242-535 (DHRRIGADLD…LIEHYEGKFP (294 aa)) are catalytic. 3 residues coordinate Zn(2+): Cys-335, His-386, and His-512.

Belongs to the class-II aminoacyl-tRNA synthetase family. In terms of assembly, homodimer. The cofactor is Zn(2+).

It is found in the cytoplasm. It catalyses the reaction tRNA(Thr) + L-threonine + ATP = L-threonyl-tRNA(Thr) + AMP + diphosphate + H(+). Functionally, catalyzes the attachment of threonine to tRNA(Thr) in a two-step reaction: L-threonine is first activated by ATP to form Thr-AMP and then transferred to the acceptor end of tRNA(Thr). Also edits incorrectly charged L-seryl-tRNA(Thr). The polypeptide is Threonine--tRNA ligase (Nitrosococcus oceani (strain ATCC 19707 / BCRC 17464 / JCM 30415 / NCIMB 11848 / C-107)).